Here is a 382-residue protein sequence, read N- to C-terminus: 2-heptyl-3-hydroxy-4(1H)-quinolone synthase (382 aa).

Belongs to the 3-hydroxybenzoate 6-hydroxylase family.

The catalysed reaction is 2-heptyl-4(1H)-quinolone + NADH + O2 + H(+) = 2-heptyl-3-hydroxy-4(1H)-quinolone + NAD(+) + H2O. Functionally, involved in the terminal step of the biosynthesis of quinolone which in addition to serve as a potent signal for quorum sensing, chelates iron and promotes the formation of membrane vesicles (MVs). Catalyzes the hydroxylation of 2-heptyl-4-quinolone (C7-HHQ) to yield 2-heptyl-3-hydroxy-4-quinolone (PQS). The polypeptide is 2-heptyl-3-hydroxy-4(1H)-quinolone synthase (pqsH) (Pseudomonas aeruginosa (strain ATCC 15692 / DSM 22644 / CIP 104116 / JCM 14847 / LMG 12228 / 1C / PRS 101 / PAO1)).